We begin with the raw amino-acid sequence, 149 residues long: Calmodulin-like protein (149 aa).

EF-hand domains are found at residues 6–41 (TTQA…VGSN), 42–76 (PTQQ…KMKY), 78–113 (DSEA…IGEK), and 113–148 (KLTK…SKSF). Ca(2+)-binding residues include Asp19, Asp21, Asp23, Lys25, and Glu30.

This sequence belongs to the calmodulin family.

The protein resides in the contractile vacuole. Its function is as follows. Mediates the control of a large number of enzymes, ion channels and other proteins by Ca(2+) ions. Among the enzymes to be stimulated by the calmodulin-Ca(2+) complex are a number of protein kinases and phosphatases. The protein is Calmodulin-like protein (calB) of Dictyostelium discoideum (Social amoeba).